We begin with the raw amino-acid sequence, 50 residues long: C-C motif chemokine 5 (50 aa).

Belongs to the intercrine beta (chemokine CC) family.

It is found in the secreted. Chemoattractant for blood monocytes, memory T-helper cells and eosinophils. Causes the release of histamine from basophils and activates eosinophils. May activate several chemokine receptors including CCR1, CCR3, CCR4 and CCR5. May also be an agonist of the G protein-coupled receptor GPR75. Together with GPR75, may play a role in neuron survival through activation of a downstream signaling pathway involving the PI3, Akt and MAP kinases. By activating GPR75 may also play a role in insulin secretion by islet cells. The chain is C-C motif chemokine 5 (CCL5) from Sus scrofa (Pig).